The sequence spans 451 residues: Tubulin gamma-1 chain (451 aa).

The residue at position 131 (serine 131) is a Phosphoserine; by BRSK1. Residue 142–148 participates in GTP binding; sequence AGGTGSG.

The protein belongs to the tubulin family. In terms of assembly, component of the gamma-tubulin ring complex (gTuRC) consisting of TUBGCP2, TUBGCP3, TUBGCP4, TUBGCP5 and TUBGCP6 and gamma-tubulin TUBG1 or TUBG2. TUBGCP2, TUBGCP3, TUBGCP4, TUBGCP5 and TUBGCP6 assemble in a 5:5:2:1:1 stoichiometry; each is associated with a gamma-tubulin, thereby arranging 14 gamma-tubulins in a helical manner. Gamma-tubulin at the first position is blocked by TUBGCP3 at the last position, allowing 13 protafilaments to grow into a microtubule. The gTuRC (via TUBGCP3 and TUBGCP6) interacts with ACTB and MZT1; the interactions form a luminal bridge that stabilizes the initial structure during complex assembly. The gTuRC (via TUBGCP2) interacts with MZT2A/MZT2B and CDK5RAP2 (via CM1 motif); the interactions play a role in gTuRC activation. Interacts with alpha-beta tubulin heterodimers; the interaction allows microtubules to nucleate from the gTuRC. Interacts with B9D2. Interacts with CDK5RAP2; the interaction is leading to centrosomal localization of TUBG1 and CDK5RAP2. Interacts with CIMAP3. Interacts with SAS6 and NUP62 at the centrosome. Interacts with EML3 (phosphorylated at 'Thr-881') and HAUS8. Interacts with DNM2; this interaction may participate in centrosome cohesion. Interacts with CCDC66. Phosphorylation at Ser-131 by BRSK1 regulates centrosome duplication, possibly by mediating relocation of gamma-tubulin and its associated proteins from the cytoplasm to the centrosome.

The protein resides in the cytoplasm. Its subcellular location is the cytoskeleton. The protein localises to the microtubule organizing center. It is found in the centrosome. It localises to the spindle. Its function is as follows. Tubulin is the major constituent of microtubules, protein filaments consisting of alpha- and beta-tubulin heterodimers. Gamma-tubulin is a key component of the gamma-tubulin ring complex (gTuRC) which mediates microtubule nucleation. The gTuRC regulates the minus-end nucleation of alpha-beta tubulin heterodimers that grow into microtubule protafilaments, a critical step in centrosome duplication and spindle formation. This Canis lupus familiaris (Dog) protein is Tubulin gamma-1 chain.